Here is a 66-residue protein sequence, read N- to C-terminus: Large ribosomal subunit protein uL29 (66 aa).

This sequence belongs to the universal ribosomal protein uL29 family.

This is Large ribosomal subunit protein uL29 from Helicobacter pylori (strain Shi470).